Reading from the N-terminus, the 233-residue chain is Phosphoribosylformylglycinamidine synthase subunit PurQ (233 aa).

The region spanning 3–233 is the Glutamine amidotransferase type-1 domain; it reads SAVLVFPGIN…GLVAHLERAA (231 aa). The active-site Nucleophile is the cysteine 87. Residues histidine 204 and glutamate 206 contribute to the active site.

As to quaternary structure, part of the FGAM synthase complex composed of 1 PurL, 1 PurQ and 2 PurS subunits.

Its subcellular location is the cytoplasm. It carries out the reaction N(2)-formyl-N(1)-(5-phospho-beta-D-ribosyl)glycinamide + L-glutamine + ATP + H2O = 2-formamido-N(1)-(5-O-phospho-beta-D-ribosyl)acetamidine + L-glutamate + ADP + phosphate + H(+). The catalysed reaction is L-glutamine + H2O = L-glutamate + NH4(+). The protein operates within purine metabolism; IMP biosynthesis via de novo pathway; 5-amino-1-(5-phospho-D-ribosyl)imidazole from N(2)-formyl-N(1)-(5-phospho-D-ribosyl)glycinamide: step 1/2. Part of the phosphoribosylformylglycinamidine synthase complex involved in the purines biosynthetic pathway. Catalyzes the ATP-dependent conversion of formylglycinamide ribonucleotide (FGAR) and glutamine to yield formylglycinamidine ribonucleotide (FGAM) and glutamate. The FGAM synthase complex is composed of three subunits. PurQ produces an ammonia molecule by converting glutamine to glutamate. PurL transfers the ammonia molecule to FGAR to form FGAM in an ATP-dependent manner. PurS interacts with PurQ and PurL and is thought to assist in the transfer of the ammonia molecule from PurQ to PurL. This chain is Phosphoribosylformylglycinamidine synthase subunit PurQ, found in Nitrobacter winogradskyi (strain ATCC 25391 / DSM 10237 / CIP 104748 / NCIMB 11846 / Nb-255).